The primary structure comprises 464 residues: Protein FAM90A14 (464 aa).

Disordered stretches follow at residues methionine 1–leucine 42, proline 70–alanine 389, and alanine 411–proline 437. Basic and acidic residues-rich tracts occupy residues glycine 74–valine 89 and asparagine 97–arginine 114. Residues leucine 180 to leucine 197 show a composition bias toward low complexity.

Belongs to the FAM90 family.

In Homo sapiens (Human), this protein is Protein FAM90A14.